A 417-amino-acid polypeptide reads, in one-letter code: NADH-quinone oxidoreductase subunit D (417 aa).

This sequence belongs to the complex I 49 kDa subunit family. In terms of assembly, NDH-1 is composed of 14 different subunits. Subunits NuoB, C, D, E, F, and G constitute the peripheral sector of the complex.

Its subcellular location is the cell inner membrane. The catalysed reaction is a quinone + NADH + 5 H(+)(in) = a quinol + NAD(+) + 4 H(+)(out). Functionally, NDH-1 shuttles electrons from NADH, via FMN and iron-sulfur (Fe-S) centers, to quinones in the respiratory chain. The immediate electron acceptor for the enzyme in this species is believed to be ubiquinone. Couples the redox reaction to proton translocation (for every two electrons transferred, four hydrogen ions are translocated across the cytoplasmic membrane), and thus conserves the redox energy in a proton gradient. The sequence is that of NADH-quinone oxidoreductase subunit D from Aromatoleum aromaticum (strain DSM 19018 / LMG 30748 / EbN1) (Azoarcus sp. (strain EbN1)).